Consider the following 353-residue polypeptide: MTIALGKFSKDEKTLLDVLDDWLRRDRFVFIGWSGLLLFPCAYFALGGWFTGTTFVTSWYTHGLASSYLEGCNFLTAAVSTPANSLAHSLLLLWGPEAQGDFTRWCQLGGLWTFVAFHGAFGLIGFMLRQFELARSVQLRPYNAIAFSAPIAVFVSVFLIYPLGQSGWFFAPSFGVAAIFRFILFFQGFHNWTLNPFHMMGVAGVLGAALLCAIHGATVENTLFEDGDGANTFRAFNPTQAEETYSMVTANRFWSQIFGVAFSNKRWLHFFMLFVPVTGLWMSAIGVVGLALNLRAYDFVSQEIRAAEDPEFETFYTKNILLNEGIRAWMAAQDQPHENLIFPEEVLPRGNAL.

Thr-2 carries the post-translational modification N-acetylthreonine. Thr-2 is subject to Phosphothreonine. The helical transmembrane segment at 41–61 threads the bilayer; that stretch reads CAYFALGGWFTGTTFVTSWYT. His-118 serves as a coordination point for chlorophyll a. The chain crosses the membrane as a helical span at residues 125–141; sequence GFMLRQFELARSVQLRP. 2 residues coordinate pheophytin a: Gln-130 and Asn-143. Residues 153–166 form a helical membrane-spanning segment; the sequence is VFVSVFLIYPLGQS. Position 198 (His-198) interacts with chlorophyll a. The chain crosses the membrane as a helical span at residues 208–228; it reads AALLCAIHGATVENTLFEDGD. The a plastoquinone site is built by His-215 and Phe-262. His-215 lines the Fe cation pocket. Residue His-269 participates in Fe cation binding. The chain crosses the membrane as a helical span at residues 279-295; it reads GLWMSAIGVVGLALNLR.

It belongs to the reaction center PufL/M/PsbA/D family. In terms of assembly, PSII is composed of 1 copy each of membrane proteins PsbA, PsbB, PsbC, PsbD, PsbE, PsbF, PsbH, PsbI, PsbJ, PsbK, PsbL, PsbM, PsbT, PsbX, PsbY, PsbZ, Psb30/Ycf12, at least 3 peripheral proteins of the oxygen-evolving complex and a large number of cofactors. It forms dimeric complexes. The D1/D2 heterodimer binds P680, chlorophylls that are the primary electron donor of PSII, and subsequent electron acceptors. It shares a non-heme iron and each subunit binds pheophytin, quinone, additional chlorophylls, carotenoids and lipids. There is also a Cl(-1) ion associated with D1 and D2, which is required for oxygen evolution. The PSII complex binds additional chlorophylls, carotenoids and specific lipids. is required as a cofactor.

It localises to the plastid. Its subcellular location is the chloroplast thylakoid membrane. The enzyme catalyses 2 a plastoquinone + 4 hnu + 2 H2O = 2 a plastoquinol + O2. Functionally, photosystem II (PSII) is a light-driven water:plastoquinone oxidoreductase that uses light energy to abstract electrons from H(2)O, generating O(2) and a proton gradient subsequently used for ATP formation. It consists of a core antenna complex that captures photons, and an electron transfer chain that converts photonic excitation into a charge separation. The D1/D2 (PsbA/PsbD) reaction center heterodimer binds P680, the primary electron donor of PSII as well as several subsequent electron acceptors. D2 is needed for assembly of a stable PSII complex. This is Photosystem II D2 protein from Welwitschia mirabilis (Tree tumbo).